The primary structure comprises 1141 residues: DNA-directed RNA polymerase subunit beta (1141 aa).

It belongs to the RNA polymerase beta chain family. As to quaternary structure, the RNAP catalytic core consists of 2 alpha, 1 beta, 1 beta' and 1 omega subunit. When a sigma factor is associated with the core the holoenzyme is formed, which can initiate transcription.

It carries out the reaction RNA(n) + a ribonucleoside 5'-triphosphate = RNA(n+1) + diphosphate. DNA-dependent RNA polymerase catalyzes the transcription of DNA into RNA using the four ribonucleoside triphosphates as substrates. The sequence is that of DNA-directed RNA polymerase subunit beta from Frankia casuarinae (strain DSM 45818 / CECT 9043 / HFP020203 / CcI3).